The sequence spans 702 residues: Elongation factor G (702 aa).

Positions 8–290 (ERYRNIGISA…AVIDYLPSPV (283 aa)) constitute a tr-type G domain. Residues 17 to 24 (AHIDAGKT), 88 to 92 (DTPGH), and 142 to 145 (NKMD) contribute to the GTP site.

Belongs to the TRAFAC class translation factor GTPase superfamily. Classic translation factor GTPase family. EF-G/EF-2 subfamily.

The protein resides in the cytoplasm. In terms of biological role, catalyzes the GTP-dependent ribosomal translocation step during translation elongation. During this step, the ribosome changes from the pre-translocational (PRE) to the post-translocational (POST) state as the newly formed A-site-bound peptidyl-tRNA and P-site-bound deacylated tRNA move to the P and E sites, respectively. Catalyzes the coordinated movement of the two tRNA molecules, the mRNA and conformational changes in the ribosome. The polypeptide is Elongation factor G (Acidovorax sp. (strain JS42)).